The sequence spans 404 residues: Tryptophan synthase beta chain (404 aa).

N6-(pyridoxal phosphate)lysine is present on Lys94.

The protein belongs to the TrpB family. In terms of assembly, tetramer of two alpha and two beta chains. Pyridoxal 5'-phosphate serves as cofactor.

It carries out the reaction (1S,2R)-1-C-(indol-3-yl)glycerol 3-phosphate + L-serine = D-glyceraldehyde 3-phosphate + L-tryptophan + H2O. Its pathway is amino-acid biosynthesis; L-tryptophan biosynthesis; L-tryptophan from chorismate: step 5/5. In terms of biological role, the beta subunit is responsible for the synthesis of L-tryptophan from indole and L-serine. The sequence is that of Tryptophan synthase beta chain from Staphylococcus saprophyticus subsp. saprophyticus (strain ATCC 15305 / DSM 20229 / NCIMB 8711 / NCTC 7292 / S-41).